A 219-amino-acid chain; its full sequence is Ribose-5-phosphate isomerase A (219 aa).

Substrate-binding positions include 28 to 31 (TGST), 81 to 84 (DGAD), and 94 to 97 (KGGG). Residue Glu-103 is the Proton acceptor of the active site. Lys-121 contacts substrate.

The protein belongs to the ribose 5-phosphate isomerase family. In terms of assembly, homodimer.

The enzyme catalyses aldehydo-D-ribose 5-phosphate = D-ribulose 5-phosphate. The protein operates within carbohydrate degradation; pentose phosphate pathway; D-ribose 5-phosphate from D-ribulose 5-phosphate (non-oxidative stage): step 1/1. Functionally, catalyzes the reversible conversion of ribose-5-phosphate to ribulose 5-phosphate. The sequence is that of Ribose-5-phosphate isomerase A from Pectobacterium atrosepticum (strain SCRI 1043 / ATCC BAA-672) (Erwinia carotovora subsp. atroseptica).